Reading from the N-terminus, the 359-residue chain is Structure-specific endonuclease subunit SLX1 homolog (359 aa).

The GIY-YIG domain occupies 9–91; sequence GLFACYCLVA…TYPTRSRYVN (83 aa). The SLX1-type zinc-finger motif lies at 192-238; the sequence is CPICQDGVSPSNVQCMQCSARFCITCAGKLFTRRNTLIPCFGKCPIC. Residues 256 to 359 are disordered; it reads VAGRKSVPHK…LPSDVISITD (104 aa). The segment covering 269 to 281 has biased composition (polar residues); sequence VDGQSSLSQNSSY. Positions 295–306 are enriched in basic and acidic residues; that stretch reads EPEKDDISRDES. The segment covering 316–326 has biased composition (low complexity); that stretch reads SSVALSDSSRS.

It belongs to the SLX1 family. As to quaternary structure, forms a heterodimer with a member of the SLX4 family. A divalent metal cation is required as a cofactor.

The protein localises to the nucleus. Functionally, catalytic subunit of a heterodimeric structure-specific endonuclease that resolves DNA secondary structures generated during DNA repair and recombination. Has endonuclease activity towards branched DNA substrates, introducing single-strand cuts in duplex DNA close to junctions with ss-DNA. The chain is Structure-specific endonuclease subunit SLX1 homolog from Giardia intestinalis (strain ATCC 50803 / WB clone C6) (Giardia lamblia).